The sequence spans 180 residues: UPF0149 protein XCV3523 (180 aa).

The protein belongs to the UPF0149 family.

In Xanthomonas euvesicatoria pv. vesicatoria (strain 85-10) (Xanthomonas campestris pv. vesicatoria), this protein is UPF0149 protein XCV3523.